The sequence spans 248 residues: Indole-3-glycerol phosphate synthase (248 aa).

The protein belongs to the TrpC family. As to quaternary structure, monomer.

The catalysed reaction is 1-(2-carboxyphenylamino)-1-deoxy-D-ribulose 5-phosphate + H(+) = (1S,2R)-1-C-(indol-3-yl)glycerol 3-phosphate + CO2 + H2O. It functions in the pathway amino-acid biosynthesis; L-tryptophan biosynthesis; L-tryptophan from chorismate: step 4/5. The sequence is that of Indole-3-glycerol phosphate synthase (trpC) from Saccharolobus solfataricus (strain ATCC 35092 / DSM 1617 / JCM 11322 / P2) (Sulfolobus solfataricus).